Reading from the N-terminus, the 285-residue chain is Probable endonuclease 4 (285 aa).

The Zn(2+) site is built by H69, H109, E145, D179, H182, H216, D229, H231, and E261.

The protein belongs to the AP endonuclease 2 family. Zn(2+) serves as cofactor.

It carries out the reaction Endonucleolytic cleavage to 5'-phosphooligonucleotide end-products.. Its function is as follows. Endonuclease IV plays a role in DNA repair. It cleaves phosphodiester bonds at apurinic or apyrimidinic (AP) sites, generating a 3'-hydroxyl group and a 5'-terminal sugar phosphate. The polypeptide is Probable endonuclease 4 (Escherichia coli O127:H6 (strain E2348/69 / EPEC)).